Here is a 295-residue protein sequence, read N- to C-terminus: 4-diphosphocytidyl-2-C-methyl-D-erythritol kinase (295 aa).

Lysine 22 is an active-site residue. 106–116 (PAGGGFGGGSS) contacts ATP. Residue aspartate 148 is part of the active site.

This sequence belongs to the GHMP kinase family. IspE subfamily.

It carries out the reaction 4-CDP-2-C-methyl-D-erythritol + ATP = 4-CDP-2-C-methyl-D-erythritol 2-phosphate + ADP + H(+). The protein operates within isoprenoid biosynthesis; isopentenyl diphosphate biosynthesis via DXP pathway; isopentenyl diphosphate from 1-deoxy-D-xylulose 5-phosphate: step 3/6. Its function is as follows. Catalyzes the phosphorylation of the position 2 hydroxy group of 4-diphosphocytidyl-2C-methyl-D-erythritol. This chain is 4-diphosphocytidyl-2-C-methyl-D-erythritol kinase, found in Xanthomonas axonopodis pv. citri (strain 306).